We begin with the raw amino-acid sequence, 382 residues long: Galactokinase (382 aa).

34 to 37 (EHTD) provides a ligand contact to substrate. 124–130 (GAGLSSS) is a binding site for ATP. Residues S130 and E162 each contribute to the Mg(2+) site. Residue D174 is the Proton acceptor of the active site. Y223 provides a ligand contact to substrate.

The protein belongs to the GHMP kinase family. GalK subfamily.

The protein localises to the cytoplasm. The catalysed reaction is alpha-D-galactose + ATP = alpha-D-galactose 1-phosphate + ADP + H(+). It functions in the pathway carbohydrate metabolism; galactose metabolism. Functionally, catalyzes the transfer of the gamma-phosphate of ATP to D-galactose to form alpha-D-galactose-1-phosphate (Gal-1-P). This is Galactokinase from Salmonella paratyphi C (strain RKS4594).